The chain runs to 561 residues: Potassium-transporting ATPase potassium-binding subunit (561 aa).

The next 12 helical transmembrane spans lie at 2–22 (GQGL…TPVL), 66–86 (IRAI…LIYF), 135–155 (ALGF…IAFI), 177–197 (ILLP…VPQT), 253–273 (LIET…YGVF), 280–300 (AWLL…VAAG), 327–347 (FGWA…CGAV), 354–374 (LMPQ…IWGG), 378–398 (GTAY…LMVG), 413–433 (IVLA…PSAI), 482–502 (LSTS…MLLL), and 531–551 (AGIV…LGPI).

This sequence belongs to the KdpA family. The system is composed of three essential subunits: KdpA, KdpB and KdpC.

It localises to the cell inner membrane. In terms of biological role, part of the high-affinity ATP-driven potassium transport (or Kdp) system, which catalyzes the hydrolysis of ATP coupled with the electrogenic transport of potassium into the cytoplasm. This subunit binds the periplasmic potassium ions and delivers the ions to the membrane domain of KdpB through an intramembrane tunnel. The polypeptide is Potassium-transporting ATPase potassium-binding subunit (Nostoc sp. (strain PCC 7120 / SAG 25.82 / UTEX 2576)).